We begin with the raw amino-acid sequence, 29 residues long: Cytochrome b6-f complex subunit 8 (29 aa).

Residues 3 to 23 (IVSLAWAGLMVVFTFSLSLVV) form a helical membrane-spanning segment.

Belongs to the PetN family. The 4 large subunits of the cytochrome b6-f complex are cytochrome b6, subunit IV (17 kDa polypeptide, PetD), cytochrome f and the Rieske protein, while the 4 small subunits are PetG, PetL, PetM and PetN. The complex functions as a dimer.

Its subcellular location is the plastid. The protein resides in the chloroplast thylakoid membrane. Its function is as follows. Component of the cytochrome b6-f complex, which mediates electron transfer between photosystem II (PSII) and photosystem I (PSI), cyclic electron flow around PSI, and state transitions. This chain is Cytochrome b6-f complex subunit 8, found in Arabis hirsuta (Hairy rock-cress).